A 408-amino-acid chain; its full sequence is Neutral cholesterol ester hydrolase 1 (408 aa).

At 1-4 the chain is on the cytoplasmic side; it reads MRSS. The helical; Signal-anchor for type II membrane protein transmembrane segment at 5–25 threads the bilayer; sequence CVLLAALLALVAYYVYIPLPS. Over 26-408 the chain is Lumenal; that stretch reads AVSDPWKLML…SYFKWLDQNL (383 aa). The Involved in the stabilization of the negatively charged intermediate by the formation of the oxyanion hole motif lies at 113–115; the sequence is HGG. S191 is a catalytic residue. N-linked (GlcNAc...) asparagine glycosylation is present at N270. D348 is an active-site residue. Residue N367 is glycosylated (N-linked (GlcNAc...) asparagine). H378 is an active-site residue. An N-linked (GlcNAc...) asparagine glycan is attached at N389.

The protein belongs to the 'GDXG' lipolytic enzyme family. Post-translationally, N-glycosylated.

The protein localises to the cell membrane. The protein resides in the microsome. The enzyme catalyses a 1-O-alkyl-2-acetyl-sn-glycerol + H2O = a 1-O-alkyl-sn-glycerol + acetate + H(+). It carries out the reaction 1-O-hexadecyl-2-acetyl-sn-glycerol + H2O = 1-O-hexadecyl-sn-glycerol + acetate + H(+). The catalysed reaction is a cholesterol ester + H2O = cholesterol + a fatty acid + H(+). It catalyses the reaction cholesteryl (9Z-octadecenoate) + H2O = cholesterol + (9Z)-octadecenoate + H(+). In terms of biological role, hydrolyzes 2-acetyl monoalkylglycerol ether (1-O-alkyl-2-acetyl-sn-glycerol), the penultimate precursor of the pathway for de novo synthesis of platelet-activating factor. May be responsible for the hydrolysis of cholesterol esters (such as cholesteryl (9Z-octadecenoate)) in macrophages. Also involved in organ detoxification by hydrolyzing exogenous organophosphorus compounds. This Rattus norvegicus (Rat) protein is Neutral cholesterol ester hydrolase 1 (Nceh1).